The sequence spans 687 residues: Ataxin-1-like (687 aa).

A compositionally biased stretch (basic and acidic residues) spans M1–L19. Disordered regions lie at residues M1–S46, A185–A223, and S261–S294. Positions P20–S197 are interaction with NCOR2 and ATXN1. The tract at residues P20 to S197 is self-association. Composition is skewed to polar residues over residues R28–S43 and F198–P219. Basic and acidic residues predominate over residues R272–E283. Residue S282 is modified to Phosphoserine. T328 is modified (phosphothreonine). The tract at residues D356–R379 is disordered. S359 is subject to Phosphoserine. One can recognise an AXH domain in the interval P455–N586. The segment at S587–P649 is disordered.

It belongs to the ATXN1 family. In terms of assembly, homodimer. Interacts (via AXH domain) with NCOR2. Interacts with ATXN1 and CIC. Directly interacts with RBPJ; this interaction is disrupted in the presence of Notch intracellular domain. Competes with ATXN1 for RBPJ-binding. Found in a complex with CIC and ATXN1. As to expression, expressed in the cortex and hypothalamus (at protein level). Expressed in neuronal cells. Highly expressed in Purkinje cells of cerebellum.

The protein localises to the nucleus. It localises to the cell projection. The protein resides in the dendrite. Its function is as follows. Chromatin-binding factor that repress Notch signaling in the absence of Notch intracellular domain by acting as a CBF1 corepressor. Binds to the HEY promoter and might assist, along with NCOR2, RBPJ-mediated repression. Can suppress the cytotoxicity of ATXN1 in spinocerebellar ataxia type 1 (SCA1). In concert with CIC and ATXN1, involved in brain development. The sequence is that of Ataxin-1-like (Atxn1l) from Mus musculus (Mouse).